Here is a 388-residue protein sequence, read N- to C-terminus: Na(+)/H(+) antiporter NhaA (388 aa).

Helical transmembrane passes span 8 to 28, 33 to 53, 59 to 79, 95 to 115, 125 to 145, 154 to 174, 179 to 199, 217 to 237, 259 to 279, 287 to 307, 328 to 348, and 363 to 383; these read FLKL…IALI, PLQG…FAAL, LLLW…GLEV, LFPV…YLLF, GWAI…ALLS, VFLL…IALF, VSLV…WMNW, VCIL…GFLI, VAYL…LNGV, ILPL…IFLF, IFAV…ISGL, and LGIL…LRMV.

This sequence belongs to the NhaA Na(+)/H(+) (TC 2.A.33) antiporter family.

Its subcellular location is the cell inner membrane. The catalysed reaction is Na(+)(in) + 2 H(+)(out) = Na(+)(out) + 2 H(+)(in). Its function is as follows. Na(+)/H(+) antiporter that extrudes sodium in exchange for external protons. The chain is Na(+)/H(+) antiporter NhaA from Photorhabdus laumondii subsp. laumondii (strain DSM 15139 / CIP 105565 / TT01) (Photorhabdus luminescens subsp. laumondii).